Reading from the N-terminus, the 99-residue chain is Nucleoid-associated protein UUR10_0100 (99 aa).

This sequence belongs to the YbaB/EbfC family. Homodimer.

Its subcellular location is the cytoplasm. It is found in the nucleoid. In terms of biological role, binds to DNA and alters its conformation. May be involved in regulation of gene expression, nucleoid organization and DNA protection. This is Nucleoid-associated protein UUR10_0100 from Ureaplasma urealyticum serovar 10 (strain ATCC 33699 / Western).